A 341-amino-acid polypeptide reads, in one-letter code: HTH-type transcriptional repressor PurR (341 aa).

In terms of domain architecture, HTH lacI-type spans 2–56; the sequence is ATIKDVAKHAGVSTTTVSHVINKTRFVAENTKAAVWAAIKELHYSPSAVARSLKV. A DNA-binding region (H-T-H motif) is located at residues 4–23; the sequence is IKDVAKHAGVSTTTVSHVIN. Residues 48 to 56 mediate DNA binding; sequence SAVARSLKV. Hypoxanthine-binding residues include tyrosine 73, arginine 190, threonine 192, and aspartate 275.

Homodimer.

Its pathway is purine metabolism; purine nucleotide biosynthesis [regulation]. In terms of biological role, is the main repressor of the genes involved in the de novo synthesis of purine nucleotides, regulating purB, purC, purEK, purF, purHD, purL, purMN and guaBA expression. PurR is allosterically activated to bind its cognate DNA by binding the purine corepressors, hypoxanthine or guanine, thereby effecting transcription repression. In Yersinia pestis bv. Antiqua (strain Antiqua), this protein is HTH-type transcriptional repressor PurR.